A 570-amino-acid polypeptide reads, in one-letter code: Serine/threonine-protein kinase flr-4 (570 aa).

The 292-residue stretch at 40 to 331 (YKYIQDLGKG…KLRIQIKKIL (292 aa)) folds into the Protein kinase domain. ATP contacts are provided by residues 46 to 54 (LGKGRFGTV) and lysine 67. Aspartate 172 (proton acceptor) is an active-site residue. Positions 338–369 (EEETDISHPISNSNTDSSTAISHNHSNDRKVG) are disordered. Residues 346-361 (PISNSNTDSSTAISHN) are compositionally biased toward polar residues. The next 3 membrane-spanning stretches (helical) occupy residues 400-420 (IMQI…FLNI), 425-445 (ICYL…FLLI), and 471-491 (LIIS…CCMV). Residues 550–570 (VRRNHDDYYYDESSGPANEEN) are disordered.

Belongs to the protein kinase superfamily. Ser/Thr protein kinase family. As to expression, present in the intestinal cells from comma-stage embryos through the adult stage, although the intestinal expression is weaker after the L1 stage. Accumulates at the cell membrane of intestinal cells, especially the lateral membrane intervening the intestinal cells. Also detected in the muscles of the pharyngeal isthmus from the 3-fold embryonic stage, and in a pair of head neurons, which correspond to the AUA neurons, from the late L1 stage (at protein level).

Its subcellular location is the membrane. The enzyme catalyses L-seryl-[protein] + ATP = O-phospho-L-seryl-[protein] + ADP + H(+). It carries out the reaction L-threonyl-[protein] + ATP = O-phospho-L-threonyl-[protein] + ADP + H(+). Its function is as follows. Probable serine-threonine protein kinase involved in the control of defecation rhythms. Required to increase the length of defecation cycle period. Acts in a cell-functional rather than developmental aspect in the regulation of defecation rhythms. Prevents preferential activation of the p38 MAPK pathway in response to the levels of vitamin B12 in different food types during larval development, thereby regulating the expression of cytoprotective genes, modulating life span and stress tolerance. This chain is Serine/threonine-protein kinase flr-4 (flr-4), found in Caenorhabditis elegans.